The following is a 927-amino-acid chain: Band 3 anion transport protein (927 aa).

N-acetylmethionine is present on Met1. Topologically, residues 1 to 420 are cytoplasmic; that stretch reads MGDMQDHEKV…LSDITDALSP (420 aa). A Phosphoserine modification is found at Ser18. A phosphotyrosine mark is found at Tyr31 and Tyr56. The interval 69 to 303 is globular; that stretch reads SQVYVELQEL…LGRAAATLMT (235 aa). The tract at residues 190-199 is interaction with ANK1; it reads AVLTRSGAPS. Phosphoserine occurs at positions 199 and 222. Residues 317–370 are dimerization arm; the sequence is RGELLSSLDSFLDCSLVLPPTEAPSEKALLNLVPVQKELLRKRYLPRPAKPDPN. Residues 367–390 form a disordered region; sequence PDPNLYEALDGGKEGPGDEDDPLR. Tyr372 is subject to Phosphotyrosine. The helical transmembrane segment at 421 to 444 threads the bilayer; that stretch reads QVLAAVIFIYFAALSPAVTFGGLL. Over 445–452 the chain is Extracellular; it reads GEKTRNLM. Residues 453 to 473 form a helical membrane-spanning segment; that stretch reads GVSELLISTAVQGILFALLGA. The Cytoplasmic segment spans residues 474-476; sequence QPL. The chain crosses the membrane as a discontinuously helical span at residues 477 to 493; the sequence is LVLGFSGPLLVFEEAFY. Over 494-502 the chain is Extracellular; the sequence is SFCESNNLE. A helical transmembrane segment spans residues 503–523; sequence YIVGRAWIGFWLILLVVLVVA. The Cytoplasmic segment spans residues 524–535; it reads FEGSFLVQYISR. A helical membrane pass occupies residues 536-558; sequence YTQEIFSFLISLIFIYETFSKLI. The Extracellular segment spans residues 559 to 586; it reads KIFQDYPLQESYAPVVMKPKPQGPVPNT. The chain crosses the membrane as a helical span at residues 587-607; sequence ALLSLVLMVGTFLLAMMLRKF. Residues 608-618 lie on the Cytoplasmic side of the membrane; sequence KNSTYFPGKLR. The helical transmembrane segment at 619–639 threads the bilayer; the sequence is RVIGDFGVPISILIMVLVDTF. Residues 640-679 are Extracellular-facing; sequence IKNTYTQKLSVPDGLKVSNSSARGWVIHPLGLYNHFPKWM. The N-linked (GlcNAc...) asparagine glycan is linked to Asn658. A helical membrane pass occupies residues 680-700; it reads MFASVLPALLVFILIFLESQI. Residues 701-716 lie on the Cytoplasmic side of the membrane; it reads TTLIVSKPERKMIKGS. Residues 717 to 735 traverse the membrane as a helical segment; it reads GFHLDLLLVVGMGGVAALF. The discontinuously helical transmembrane segment at 736–753 threads the bilayer; that stretch reads GMPWLSATTVRSVTHANA. Topologically, residues 754–776 are cytoplasmic; that stretch reads LTVMGKASGPGAAAQIQEVKEQR. A run of 2 helical transmembrane segments spans residues 777-797 and 798-816; these read ISGL…PILS and RIPL…ITSL. At 817 to 854 the chain is on the cytoplasmic side; the sequence is SGIQLFDRILLLFKPPKYHPDVPFVKRVKTWRMHLFTG. The segment at residues 855 to 885 is an intramembrane region (discontinuously helical); the sequence is IQIICLAVLWVVKSTPASLALPFVLILTVPL. A lipid anchor (S-palmitoyl cysteine) is attached at Cys859. The Cytoplasmic portion of the chain corresponds to 886–927; sequence RRLLLPLIFRELELQCLDGDDAKVTFDEAEGLDEYDEVPMPV. A Phosphotyrosine modification is found at Tyr920.

This sequence belongs to the anion exchanger (TC 2.A.31) family. In terms of assembly, a dimer in solution, but in its membrane environment, it exists primarily as a mixture of dimers and tetramers and spans the membrane asymmetrically. Component of the ankyrin-1 complex in the erythrocyte, composed of ANK1, RHCE, RHAG, SLC4A1, EPB42, GYPA, GYPB and AQP1. Interacts with STOM; this interaction positively regulates SLC4A1 activity. Interacts with GYPA; a GYPA monomer is bound at each end of the SLC4A1 dimer forming a heterotetramer. Three SLC4A1 dimers (Band 3-I, Band 3-II and Band 3-III) participates in the ankyrin-1 complex. Interacts (via the cytoplasmic domain) with EPB42; this interaction is mediated by the SLC4A1 Band 3-I dimer. Interacts (via the cytoplasmic domain) directly with ANK1; this interaction is mediated by the SLC4A1 Band 3-II and Band 3-III dimers. Interacts with TMEM139. Kidney.

Its subcellular location is the cell membrane. It localises to the basolateral cell membrane. The enzyme catalyses hydrogencarbonate(in) + chloride(out) = hydrogencarbonate(out) + chloride(in). In terms of biological role, functions both as a transporter that mediates electroneutral anion exchange across the cell membrane and as a structural protein. Component of the ankyrin-1 complex of the erythrocyte membrane; required for normal flexibility and stability of the erythrocyte membrane and for normal erythrocyte shape via the interactions of its cytoplasmic domain with cytoskeletal proteins, glycolytic enzymes, and hemoglobin. Functions as a transporter that mediates the 1:1 exchange of inorganic anions across the erythrocyte membrane. Mediates chloride-bicarbonate exchange in the kidney, and is required for normal acidification of the urine. This is Band 3 anion transport protein from Rattus norvegicus (Rat).